Here is a 419-residue protein sequence, read N- to C-terminus: Hyaluronidase-3 (419 aa).

An N-terminal signal peptide occupies residues 1-16 (MTMQLGLALVLGVAMC). Cystine bridges form between Cys-42–Cys-331, Cys-205–Cys-220, Cys-356–Cys-367, Cys-361–Cys-395, and Cys-397–Cys-406. An N-linked (GlcNAc...) asparagine glycan is attached at Asn-69. The active-site Proton donor is Glu-129. Asn-215 is a glycosylation site (N-linked (GlcNAc...) asparagine). Residues 352–407 (AAMACSHQRCHGHGRCAWQDPGQLKVFLHLHPGGSPGAWESFSCRCYWGWAGPTCQ) form the EGF-like domain.

This sequence belongs to the glycosyl hydrolase 56 family. N-glycosylated. As to expression, highly expressed in bladder, spleen and liver. Expressed at low levels in the kidney.

It localises to the secreted. The protein localises to the cell membrane. It is found in the cytoplasmic vesicle. The protein resides in the secretory vesicle. Its subcellular location is the acrosome. It localises to the endoplasmic reticulum. The protein localises to the early endosome. It carries out the reaction Random hydrolysis of (1-&gt;4)-linkages between N-acetyl-beta-D-glucosamine and D-glucuronate residues in hyaluronate.. Its function is as follows. Facilitates sperm penetration into the layer of cumulus cells surrounding the egg by digesting hyaluronic acid. Involved in induction of the acrosome reaction in the sperm. Involved in follicular atresia, the breakdown of immature ovarian follicles that are not selected to ovulate. Induces ovarian granulosa cell apoptosis, possibly via apoptotic signaling pathway involving CASP8 and CASP3 activation, and poly(ADP-ribose) polymerase (PARP) cleavage. Has no hyaluronidase activity in embryonic fibroblasts in vitro. Has no hyaluronidase activity in granulosa cells in vitro. The chain is Hyaluronidase-3 (HYAL3) from Sus scrofa (Pig).